A 151-amino-acid polypeptide reads, in one-letter code: Ribonuclease H (151 aa).

Residues 1–146 (MPDLYAYTDG…ADELARAGMA (146 aa)) form the RNase H type-1 domain. Residues D9, E52, D74, and D138 each contribute to the Mg(2+) site.

Belongs to the RNase H family. In terms of assembly, monomer. It depends on Mg(2+) as a cofactor.

It localises to the cytoplasm. It catalyses the reaction Endonucleolytic cleavage to 5'-phosphomonoester.. Its function is as follows. Endonuclease that specifically degrades the RNA of RNA-DNA hybrids. The protein is Ribonuclease H of Cereibacter sphaeroides (strain ATCC 17029 / ATH 2.4.9) (Rhodobacter sphaeroides).